We begin with the raw amino-acid sequence, 366 residues long: tRNA/tmRNA (uracil-C(5))-methyltransferase (366 aa).

Gln-190, Tyr-218, Asn-223, Glu-239, and Asp-299 together coordinate S-adenosyl-L-methionine. Cys-324 (nucleophile) is an active-site residue. The active-site Proton acceptor is the Glu-358.

The protein belongs to the class I-like SAM-binding methyltransferase superfamily. RNA M5U methyltransferase family. TrmA subfamily.

It carries out the reaction uridine(54) in tRNA + S-adenosyl-L-methionine = 5-methyluridine(54) in tRNA + S-adenosyl-L-homocysteine + H(+). The enzyme catalyses uridine(341) in tmRNA + S-adenosyl-L-methionine = 5-methyluridine(341) in tmRNA + S-adenosyl-L-homocysteine + H(+). Functionally, dual-specificity methyltransferase that catalyzes the formation of 5-methyluridine at position 54 (m5U54) in all tRNAs, and that of position 341 (m5U341) in tmRNA (transfer-mRNA). The sequence is that of tRNA/tmRNA (uracil-C(5))-methyltransferase from Salmonella heidelberg (strain SL476).